The following is a 382-amino-acid chain: Na(+)/H(+) antiporter NhaA (382 aa).

The next 10 helical transmembrane spans lie at 5-25 (INLLREFSVPLIAGVITALAW), 42-62 (FGGVSLHFLVNELFMVLFFGI), 88-108 (LATLGGVIGPVLVYLSLNAVI), 116-136 (GWGIPTATDIALAWLVARLVF), 145-165 (FLLLLAVADDAIGLAIIAVFY), 169-189 (VHPTEPMWLFLTVAGIVAAYI), 261-281 (IVVDFGLFLFGLANAGVRFSS), 282-302 (VGTATWLVLTALLVGKTAGIL), 327-347 (TGLVAGMGLTVALFVAGVAFV), and 353-373 (GAAKMGALLSGGVLPVAVALG).

The protein belongs to the NhaA Na(+)/H(+) (TC 2.A.33) antiporter family.

It is found in the cell inner membrane. The enzyme catalyses Na(+)(in) + 2 H(+)(out) = Na(+)(out) + 2 H(+)(in). Na(+)/H(+) antiporter that extrudes sodium in exchange for external protons. This Geobacter metallireducens (strain ATCC 53774 / DSM 7210 / GS-15) protein is Na(+)/H(+) antiporter NhaA.